We begin with the raw amino-acid sequence, 338 residues long: Fructose-1,6-bisphosphatase class 1 (338 aa).

4 residues coordinate Mg(2+): Glu-92, Asp-115, Leu-117, and Asp-118. Substrate-binding positions include 118–121, Asn-211, Tyr-244, 262–264, and Lys-274; these read DGSS and YLY. Glu-280 provides a ligand contact to Mg(2+).

This sequence belongs to the FBPase class 1 family. As to quaternary structure, homotetramer. Requires Mg(2+) as cofactor.

Its subcellular location is the cytoplasm. The enzyme catalyses beta-D-fructose 1,6-bisphosphate + H2O = beta-D-fructose 6-phosphate + phosphate. It functions in the pathway carbohydrate biosynthesis; gluconeogenesis. The polypeptide is Fructose-1,6-bisphosphatase class 1 (Vibrio parahaemolyticus serotype O3:K6 (strain RIMD 2210633)).